The primary structure comprises 485 residues: UDP-N-acetylmuramoyl-L-alanyl-D-glutamate--2,6-diaminopimelate ligase (485 aa).

A UDP-N-acetyl-alpha-D-muramoyl-L-alanyl-D-glutamate-binding site is contributed by S30. 111–117 (GTNGKTT) is an ATP binding site. UDP-N-acetyl-alpha-D-muramoyl-L-alanyl-D-glutamate-binding positions include 153–154 (TT), S180, Q186, and R188. K220 is modified (N6-carboxylysine). Residues R378, 402–405 (DNPR), G455, and E459 contribute to the meso-2,6-diaminopimelate site. Residues 402–405 (DNPR) carry the Meso-diaminopimelate recognition motif motif.

This sequence belongs to the MurCDEF family. MurE subfamily. Mg(2+) is required as a cofactor. Carboxylation is probably crucial for Mg(2+) binding and, consequently, for the gamma-phosphate positioning of ATP.

It localises to the cytoplasm. The catalysed reaction is UDP-N-acetyl-alpha-D-muramoyl-L-alanyl-D-glutamate + meso-2,6-diaminopimelate + ATP = UDP-N-acetyl-alpha-D-muramoyl-L-alanyl-gamma-D-glutamyl-meso-2,6-diaminopimelate + ADP + phosphate + H(+). Its pathway is cell wall biogenesis; peptidoglycan biosynthesis. In terms of biological role, catalyzes the addition of meso-diaminopimelic acid to the nucleotide precursor UDP-N-acetylmuramoyl-L-alanyl-D-glutamate (UMAG) in the biosynthesis of bacterial cell-wall peptidoglycan. The polypeptide is UDP-N-acetylmuramoyl-L-alanyl-D-glutamate--2,6-diaminopimelate ligase (Bacteroides fragilis (strain ATCC 25285 / DSM 2151 / CCUG 4856 / JCM 11019 / LMG 10263 / NCTC 9343 / Onslow / VPI 2553 / EN-2)).